Here is a 481-residue protein sequence, read N- to C-terminus: G-protein coupled receptor 37-like 1 (481 aa).

An N-terminal signal peptide occupies residues 1–24 (MRWLWPLAVSLAVVLAVGPSEVSG). Over 25–134 (AATLSLGGHR…ESSYSAYAVM (110 aa)) the chain is Extracellular. Disordered stretches follow at residues 30–55 (LGGHRAKVQEQQSRPRRGTKDEGPKE) and 76–107 (LQPTKPLVATSPNPDKDGATSESGQELRTNLT). Residues 95-107 (TSESGQELRTNLT) show a composition bias toward polar residues. A glycan (N-linked (GlcNAc...) asparagine) is linked at asparagine 105. Residues 135–155 (LLALVVFAVGIVGNLSVMCIV) traverse the membrane as a helical segment. Over 156 to 167 (WHSYYLKSAWNS) the chain is Cytoplasmic. A helical transmembrane segment spans residues 168-188 (ILASLALWDFLVLFFCLPIVI). Residues 189–205 (FNEITKQRLLGDVSCRA) are Extracellular-facing. Cysteine 203 and cysteine 286 are disulfide-bonded. Residues 206-226 (VPFMEVSSLGVTTFSLCALGI) traverse the membrane as a helical segment. Residues 227-251 (DRFHVATSTLPKVRPIERCQSILAK) lie on the Cytoplasmic side of the membrane. Residues 252 to 272 (LAVIWVGSMMLAVPELLLWQL) form a helical membrane-spanning segment. At 273-310 (AQEPTPTMGTVDSCIMKPSADLPESLYSLVMTYQNARM) the chain is on the extracellular side. Residues 311 to 331 (WWYFGCYFCLPILFTVTCQLV) traverse the membrane as a helical segment. At 332-360 (TWRVRGPPGRKPECRAGRHEQCESQLNST) the chain is on the cytoplasmic side. The chain crosses the membrane as a helical span at residues 361–381 (VVGLTVVYAFCTLPENICNIV). The Extracellular portion of the chain corresponds to 382–398 (VAYLSTELTRQTLDLLG). The helical transmembrane segment at 399–419 (LINQFSTFFKGAITPVLLLCI) threads the bilayer. Topologically, residues 420-481 (CRPLGQAFLD…PPLLPLGTPC (62 aa)) are cytoplasmic. The residue at position 471 (serine 471) is a Phosphoserine. The residue at position 479 (threonine 479) is a Phosphothreonine.

The protein belongs to the G-protein coupled receptor 1 family. As to quaternary structure, interacts with the PTCH1 receptor. Post-translationally, undergoes metalloprotease-mediated cleavage which reduces its constitutive activity. Ubiquitinated. Highly expressed in brain.

The protein localises to the cell membrane. Its subcellular location is the cell projection. It is found in the cilium membrane. In terms of biological role, G-protein coupled receptor. Has been shown to bind the neuroprotective and glioprotective factor prosaposin (PSAP), leading to endocytosis followed by an ERK phosphorylation cascade. However, other studies have shown that prosaposin does not increase activity. It has been suggested that GPR37L1 is a constitutively active receptor which signals through the guanine nucleotide-binding protein G(s) subunit alpha. Participates in the regulation of postnatal cerebellar development by modulating the Shh pathway. Regulates baseline blood pressure in females and protects against cardiovascular stress in males. Mediates inhibition of astrocyte glutamate transporters and reduction in neuronal N-methyl-D-aspartate receptor activity. The protein is G-protein coupled receptor 37-like 1 (Gpr37l1) of Rattus norvegicus (Rat).